Here is a 1241-residue protein sequence, read N- to C-terminus: ATP-dependent helicase/nuclease subunit A (1241 aa).

Positions 12 to 485 (SQWTDDQWKA…IDLAKNFRSR (474 aa)) constitute a UvrD-like helicase ATP-binding domain. Residue 33–40 (AAAGSGKT) participates in ATP binding. The UvrD-like helicase C-terminal domain occupies 505–805 (GEIDYDADAE…RIMTIHKSKG (301 aa)).

This sequence belongs to the helicase family. AddA subfamily. In terms of assembly, heterodimer of AddA and AddB/RexB. The cofactor is Mg(2+).

It carries out the reaction Couples ATP hydrolysis with the unwinding of duplex DNA by translocating in the 3'-5' direction.. It catalyses the reaction ATP + H2O = ADP + phosphate + H(+). In terms of biological role, the heterodimer acts as both an ATP-dependent DNA helicase and an ATP-dependent, dual-direction single-stranded exonuclease. Recognizes the chi site generating a DNA molecule suitable for the initiation of homologous recombination. The AddA nuclease domain is required for chi fragment generation; this subunit has the helicase and 3' -&gt; 5' nuclease activities. The sequence is that of ATP-dependent helicase/nuclease subunit A from Bacillus cereus (strain ZK / E33L).